The primary structure comprises 497 residues: UDP-N-acetylmuramoyl-L-alanyl-D-glutamate--2,6-diaminopimelate ligase (497 aa).

Residue S32 participates in UDP-N-acetyl-alpha-D-muramoyl-L-alanyl-D-glutamate binding. ATP is bound at residue 113–119 (GTNGKTT). UDP-N-acetyl-alpha-D-muramoyl-L-alanyl-D-glutamate is bound by residues 155-156 (TT), S182, Q188, and R190. K222 carries the post-translational modification N6-carboxylysine. Meso-2,6-diaminopimelate contacts are provided by residues R385, 409–412 (DNPR), G460, and E464. The Meso-diaminopimelate recognition motif motif lies at 409–412 (DNPR).

The protein belongs to the MurCDEF family. MurE subfamily. Mg(2+) serves as cofactor. In terms of processing, carboxylation is probably crucial for Mg(2+) binding and, consequently, for the gamma-phosphate positioning of ATP.

It localises to the cytoplasm. The enzyme catalyses UDP-N-acetyl-alpha-D-muramoyl-L-alanyl-D-glutamate + meso-2,6-diaminopimelate + ATP = UDP-N-acetyl-alpha-D-muramoyl-L-alanyl-gamma-D-glutamyl-meso-2,6-diaminopimelate + ADP + phosphate + H(+). It participates in cell wall biogenesis; peptidoglycan biosynthesis. Its function is as follows. Catalyzes the addition of meso-diaminopimelic acid to the nucleotide precursor UDP-N-acetylmuramoyl-L-alanyl-D-glutamate (UMAG) in the biosynthesis of bacterial cell-wall peptidoglycan. The chain is UDP-N-acetylmuramoyl-L-alanyl-D-glutamate--2,6-diaminopimelate ligase from Thermosynechococcus vestitus (strain NIES-2133 / IAM M-273 / BP-1).